Here is a 185-residue protein sequence, read N- to C-terminus: Putative 3-methyladenine DNA glycosylase (185 aa).

It belongs to the DNA glycosylase MPG family.

In Rhizobium meliloti (strain 1021) (Ensifer meliloti), this protein is Putative 3-methyladenine DNA glycosylase.